Here is a 215-residue protein sequence, read N- to C-terminus: E3 ubiquitin-protein ligase NleG (215 aa).

Positions cysteine 136–valine 189 are RING/U-box domain. The short motif at threonine 213–isoleucine 215 is the PDZ-binding motif element.

This sequence belongs to the NleG E3 ligase family. In terms of assembly, interacts with host GOPC (human protein). Post-translationally, two sizes of protein are detected upon expression in C.rodentium; only the smaller protein is secreted.

It localises to the secreted. The protein localises to the host cytoplasm. It catalyses the reaction S-ubiquitinyl-[E2 ubiquitin-conjugating enzyme]-L-cysteine + [acceptor protein]-L-lysine = [E2 ubiquitin-conjugating enzyme]-L-cysteine + N(6)-ubiquitinyl-[acceptor protein]-L-lysine.. Its function is as follows. Effector proteins function to alter host cell physiology and promote bacterial survival in host tissues. This protein is an E3 ubiquitin-protein ligase that probably interferes with the host's ubiquitination pathway and targets host proteins for proteasomal degradation. Can ubiquitinate ubiquitin, giving rise to polyubiquitin chains (in vitro). Does not complement an nleG8 deletion in C.rodentium. This chain is E3 ubiquitin-protein ligase NleG, found in Escherichia coli O157:H7.